The primary structure comprises 382 residues: Galactokinase (382 aa).

34–37 (EHTD) contributes to the substrate binding site. Position 124–130 (124–130 (GAGLSSS)) interacts with ATP. Mg(2+) contacts are provided by serine 130 and glutamate 162. Catalysis depends on aspartate 174, which acts as the Proton acceptor. Tyrosine 223 is a substrate binding site.

This sequence belongs to the GHMP kinase family. GalK subfamily.

It localises to the cytoplasm. It catalyses the reaction alpha-D-galactose + ATP = alpha-D-galactose 1-phosphate + ADP + H(+). The protein operates within carbohydrate metabolism; galactose metabolism. In terms of biological role, catalyzes the transfer of the gamma-phosphate of ATP to D-galactose to form alpha-D-galactose-1-phosphate (Gal-1-P). The sequence is that of Galactokinase from Salmonella gallinarum (strain 287/91 / NCTC 13346).